The following is a 171-amino-acid chain: Ponticulin-like protein F (171 aa).

An N-terminal signal peptide occupies residues 1–20 (MKFIPALIIFVFTIFALTNS). Glycine 149 carries GPI-like-anchor amidated glycine lipidation. Positions 150–171 (TSSTIVIPFALILSLLLSVITL) are cleaved as a propeptide — removed in mature form.

It belongs to the ponticulin family. In terms of processing, the GPI-like-anchor contains a phosphoceramide group, rather than a phosphatidyl group.

It localises to the cell membrane. This Dictyostelium discoideum (Social amoeba) protein is Ponticulin-like protein F (ponF).